We begin with the raw amino-acid sequence, 93 residues long: Ribonuclease P protein component 1 (93 aa).

The protein belongs to the eukaryotic/archaeal RNase P protein component 1 family. In terms of assembly, consists of a catalytic RNA component and at least 4-5 protein subunits.

It is found in the cytoplasm. The catalysed reaction is Endonucleolytic cleavage of RNA, removing 5'-extranucleotides from tRNA precursor.. Its function is as follows. Part of ribonuclease P, a protein complex that generates mature tRNA molecules by cleaving their 5'-ends. In Methanosphaera stadtmanae (strain ATCC 43021 / DSM 3091 / JCM 11832 / MCB-3), this protein is Ribonuclease P protein component 1.